Consider the following 537-residue polypeptide: Chaperonin GroEL (537 aa).

Residues 29-32 (TLGP), 86-90 (DGTTT), Gly-413, 477-479 (NAA), and Asp-493 contribute to the ATP site.

Belongs to the chaperonin (HSP60) family. Forms a cylinder of 14 subunits composed of two heptameric rings stacked back-to-back. Interacts with the co-chaperonin GroES.

It localises to the cytoplasm. The enzyme catalyses ATP + H2O + a folded polypeptide = ADP + phosphate + an unfolded polypeptide.. Its function is as follows. Together with its co-chaperonin GroES, plays an essential role in assisting protein folding. The GroEL-GroES system forms a nano-cage that allows encapsulation of the non-native substrate proteins and provides a physical environment optimized to promote and accelerate protein folding. The chain is Chaperonin GroEL from Lactobacillus delbrueckii subsp. bulgaricus (strain ATCC 11842 / DSM 20081 / BCRC 10696 / JCM 1002 / NBRC 13953 / NCIMB 11778 / NCTC 12712 / WDCM 00102 / Lb 14).